Consider the following 74-residue polypeptide: uncharacterized protein (74 aa).

This is an uncharacterized protein from Rickettsia conorii (strain ATCC VR-613 / Malish 7).